The sequence spans 929 residues: von Willebrand factor C and EGF domain-containing protein (929 aa).

The first 21 residues, 1–21 (MWARLLLHVAYILIPLLGSSA), serve as a signal peptide directing secretion. In terms of domain architecture, EGF-like 1 spans 70 to 98 (LCSFGCGSGICIAPNVCSCQDGEQGATCP). The region spanning 142–180 (DIDECLSSSCEGHCVNTEGGFVCECGPGMQLSADRHSCQ) is the EGF-like 2; calcium-binding domain. 9 cysteine pairs are disulfide-bonded: Cys-146-Cys-155, Cys-151-Cys-164, Cys-166-Cys-179, Cys-185-Cys-194, Cys-190-Cys-203, Cys-205-Cys-218, Cys-224-Cys-237, Cys-233-Cys-246, and Cys-248-Cys-261. One can recognise an EGF-like 3; calcium-binding domain in the interval 181 to 219 (DTDECLGTPCQQRCKNSIGSYKCSCRAGFHLHGNRHSCI). The EGF-like 4; calcium-binding domain occupies 220-262 (DVNECRRPQERRVCHHTCHNTVGSFLCTCRPGFRLRSDRVSCE). Disordered regions lie at residues 291-317 (AGRPALSPGHSPPPGAPGYPTGVRTIS) and 339-374 (PSSSPLGTLGPPSLLQGAVGTPSSPRGPESPKLGAG). Residues 339 to 353 (PSSSPLGTLGPPSLL) are compositionally biased toward low complexity. VWFC domains follow at residues 376 to 433 (SSCW…PSCT), 433 to 494 (TGCF…GRCY), 491 to 552 (GRCY…FTCR), 558 to 618 (TGCS…PDCS), 619 to 677 (AGCT…PVCH), and 677 to 762 (HDCN…VNCS). 2 N-linked (GlcNAc...) asparagine glycosylation sites follow: Asn-454 and Asn-464. The segment at 731 to 774 (PLEEKQQPSPHGELAKAARNARGDTEVPVNCSSCPGPPSASPTR) is disordered. The segment covering 743–755 (ELAKAARNARGDT) has biased composition (basic and acidic residues). A glycan (N-linked (GlcNAc...) asparagine) is linked at Asn-787. The segment covering 791 to 807 (IQSASPSPPIAQTSSSP) has biased composition (polar residues). Disordered stretches follow at residues 791-861 (IQSA…SSTF) and 879-929 (AETP…NSTI). A compositionally biased stretch (low complexity) spans 889-903 (LSETLTTSSSSQRLS).

It localises to the secreted. May be a regulatory element in the beta-catenin signaling pathway and a target for chemoprevention of hapatocellular carcinoma. The polypeptide is von Willebrand factor C and EGF domain-containing protein (Vwce) (Mus musculus (Mouse)).